We begin with the raw amino-acid sequence, 133 residues long: Ribosome-binding factor A (133 aa).

This sequence belongs to the RbfA family. In terms of assembly, monomer. Binds 30S ribosomal subunits, but not 50S ribosomal subunits or 70S ribosomes.

Its subcellular location is the cytoplasm. In terms of biological role, one of several proteins that assist in the late maturation steps of the functional core of the 30S ribosomal subunit. Associates with free 30S ribosomal subunits (but not with 30S subunits that are part of 70S ribosomes or polysomes). Required for efficient processing of 16S rRNA. May interact with the 5'-terminal helix region of 16S rRNA. The chain is Ribosome-binding factor A from Trichormus variabilis (strain ATCC 29413 / PCC 7937) (Anabaena variabilis).